The sequence spans 161 residues: Probable metalloprotease HVO_1016 (161 aa).

Residues 10-131 form the MPN domain; the sequence is VGIAADALDF…WEAFDQSGEV (122 aa). The active-site Proton donor/acceptor is the glutamate 31. Residues histidine 87, histidine 89, and aspartate 100 each coordinate Zn(2+). Positions 87–100 match the JAMM motif motif; it reads HSHPNGVLRPSDAD.

The protein belongs to the peptidase M67B family. As to quaternary structure, monomer and homodimer. It depends on Zn(2+) as a cofactor.

In terms of biological role, probable metalloprotease. Does not hydrolyze SAMP1- and SAMP2-protein conjugates, diglycine-AMC, Ub-AMC, hemoglobin, cytochrome c, carbonic anhydrase, creatinine phosphokinase, beta-amylase and bovine serum albumin. This Haloferax volcanii (strain ATCC 29605 / DSM 3757 / JCM 8879 / NBRC 14742 / NCIMB 2012 / VKM B-1768 / DS2) (Halobacterium volcanii) protein is Probable metalloprotease HVO_1016.